The primary structure comprises 140 residues: MALKKNTHNKSTKRVTKHPSLKTLTHKQIHTTIFVKSTTPYVSALKRINKFLDSVHKQGSSYVAVLGMGKAVEKTLALGCHFQDQKNKKIEVYTKTIEVLDEVITEGQADIDMESDVEDDDKETQLKKRAVSGVELRIYV.

Residues 1-21 (MALKKNTHNKSTKRVTKHPSL) form a disordered region. Phosphoserine is present on S115.

The protein belongs to the histone-like Alba family. As to quaternary structure, component of nuclear RNase P and RNase MRP complexes. RNase P consists of an RNA moiety and at least 9 protein subunits including POP1, POP3, POP4, POP5, POP6, POP7, POP8, RPP1 and RPR2. RNase MRP complex consists of an RNA moiety and at least 10 protein subunits including POP1, POP3, POP4, POP5, POP6, POP7, POP8, RMP1, RPP1 and SNM1, many of which are shared with the RNase P complex.

The protein resides in the nucleus. It carries out the reaction Endonucleolytic cleavage of RNA, removing 5'-extranucleotides from tRNA precursor.. Functionally, component of ribonuclease P, a protein complex that generates mature tRNA molecules by cleaving their 5'-ends. Also a component of RNase MRP, which cleaves pre-rRNA sequences. The sequence is that of Ribonucleases P/MRP protein subunit POP7 (POP7) from Saccharomyces cerevisiae (strain ATCC 204508 / S288c) (Baker's yeast).